Reading from the N-terminus, the 796-residue chain is Nuclear GTPase SLIP-GC (796 aa).

GTP is bound at residue 107–114 (GITGAGKS). 2 coiled-coil regions span residues 158 to 185 (SDQE…EEAD) and 742 to 776 (GLCK…LRRS).

Its subcellular location is the nucleus speckle. In terms of biological role, nuclear GTPase found in germinal center B-cells, where it may inhibit function of the activation-induced cytidine deaminase AICDA. Reduces somatic hypermutation in B-cells which may enhance genome stability. This is Nuclear GTPase SLIP-GC from Mus musculus (Mouse).